An 889-amino-acid polypeptide reads, in one-letter code: Serine/threonine-protein kinase D3 (889 aa).

Phosphoserine is present on residues serine 27, serine 37, serine 41, and serine 44. The Phorbol-ester/DAG-type 1 zinc finger occupies 154 to 204 (PHALYVHSYKAPTFCDYCGEMLWGLVRQGLKCEGCGLNYHKRCAFKIPNNC). Serine 213 and serine 216 each carry phosphoserine. Residues 271–321 (PHTFAVHSYGRPTICQYCKRLLKGLFRQGMQCKDCKFNCHKRCASKVPRDC) form a Phorbol-ester/DAG-type 2 zinc finger. Residues 336–370 (TDADMPMDIDSSDVNSDGSRGLDDSEEPSPPEDKM) form a disordered region. Phosphoserine is present on residues serine 346, serine 391, and serine 395. The 117-residue stretch at 416 to 532 (TVVKEGWMVH…WEKAIRQALM (117 aa)) folds into the PH domain. A Phosphotyrosine modification is found at tyrosine 426. A Phosphoserine modification is found at serine 442. A Phosphotyrosine modification is found at tyrosine 457. Threonine 535 carries the phosphothreonine modification. Position 539 is a phosphoserine (serine 539). Residues 575 to 831 (IFADEVLGSG…VDKSLSHPWL (257 aa)) form the Protein kinase domain. ATP is bound by residues 581–589 (LGSGQFGIV) and lysine 604. Aspartate 698 serves as the catalytic Proton acceptor. Position 730 is a phosphoserine; by PKC (serine 730). Serine 734 carries the post-translational modification Phosphoserine; by autocatalysis. At tyrosine 741 the chain carries Phosphotyrosine.

The protein belongs to the protein kinase superfamily. CAMK Ser/Thr protein kinase family. PKD subfamily. Mg(2+) is required as a cofactor.

It is found in the cytoplasm. The protein localises to the membrane. It catalyses the reaction L-seryl-[protein] + ATP = O-phospho-L-seryl-[protein] + ADP + H(+). The enzyme catalyses L-threonyl-[protein] + ATP = O-phospho-L-threonyl-[protein] + ADP + H(+). Its activity is regulated as follows. Activated by DAG and phorbol esters. Phorbol-ester/DAG-type domains 1 and 2 bind both DAG and phorbol ester with high affinity and mediate translocation to the cell membrane. Autophosphorylation of Ser-734 and phosphorylation of Ser-730 by PKC relieves auto-inhibition by the PH domain. Converts transient diacylglycerol (DAG) signals into prolonged physiological effects, downstream of PKC. Involved in resistance to oxidative stress. The chain is Serine/threonine-protein kinase D3 (Prkd3) from Mus musculus (Mouse).